Here is a 345-residue protein sequence, read N- to C-terminus: Protein RecA (345 aa).

67-74 (GPESSGKT) serves as a coordination point for ATP.

It belongs to the RecA family.

The protein resides in the cytoplasm. In terms of biological role, can catalyze the hydrolysis of ATP in the presence of single-stranded DNA, the ATP-dependent uptake of single-stranded DNA by duplex DNA, and the ATP-dependent hybridization of homologous single-stranded DNAs. It interacts with LexA causing its activation and leading to its autocatalytic cleavage. The polypeptide is Protein RecA (Acidothermus cellulolyticus (strain ATCC 43068 / DSM 8971 / 11B)).